The primary structure comprises 289 residues: B- and T-lymphocyte attenuator (289 aa).

Positions 1 to 30 (MKTLPAMLGTGKLFWVFFLIPYLDIWNIHG) are cleaved as a signal peptide. One can recognise an Ig-like V-type domain in the interval 31-132 (KESCDVQLYI…LIESHSTTLY (102 aa)). Residues 31 to 157 (KESCDVQLYI…MASRPWLLYR (127 aa)) lie on the Extracellular side of the membrane. Cystine bridges form between Cys34/Cys63, Cys58/Cys115, and Cys72/Cys79. N-linked (GlcNAc...) asparagine glycans are attached at residues Asn75, Asn94, and Asn110. A helical transmembrane segment spans residues 158 to 178 (LLPLGGLPLLITTCFCLFCCL). The Cytoplasmic segment spans residues 179-289 (RRHQGKQNEL…TEYASICVRS (111 aa)).

In terms of assembly, interacts with tyrosine phosphatases PTPN6/SHP-1 and PTPN11/SHP-2. Interacts with TNFRSF14/HVEM (via cysteine-rich domain 1). Post-translationally, phosphorylated on Tyr residues by TNFRSF14 and by antigen receptors cross-linking, both inducing association with PTPN6 and PTPN11. In terms of processing, N-glycosylated.

It is found in the cell membrane. Its function is as follows. Inhibitory receptor on lymphocytes that negatively regulates antigen receptor signaling via PTPN6/SHP-1 and PTPN11/SHP-2. May interact in cis (on the same cell) or in trans (on other cells) with TNFRSF14. In cis interactions, appears to play an immune regulatory role inhibiting in trans interactions in naive T cells to maintain a resting state. In trans interactions, can predominate during adaptive immune response to provide survival signals to effector T cells. The sequence is that of B- and T-lymphocyte attenuator from Homo sapiens (Human).